Reading from the N-terminus, the 195-residue chain is E3 ubiquitin-protein ligase ZNRF1 (195 aa).

Positions 1–10 (MGGKQSSASR) are enriched in polar residues. The segment at 1–37 (MGGKQSSASRSRAPFPGVSSDDSAVPPSSNFGHFRGG) is disordered. Gly-2 carries N-myristoyl glycine lipidation. The segment covering 18–29 (VSSDDSAVPPSS) has biased composition (low complexity). The RING-type; atypical zinc finger occupies 152–193 (CVICLEELSQGDTIARLPCLCIYHKSCIDSWFEVNRCCPEHP).

The protein resides in the endosome. It localises to the lysosome. Its subcellular location is the membrane. The enzyme catalyses S-ubiquitinyl-[E2 ubiquitin-conjugating enzyme]-L-cysteine + [acceptor protein]-L-lysine = [E2 ubiquitin-conjugating enzyme]-L-cysteine + N(6)-ubiquitinyl-[acceptor protein]-L-lysine.. The protein operates within protein modification; protein ubiquitination. E3 ubiquitin-protein ligase that plays a role in neuron cells differentiation. Plays a role in the establishment and maintenance of neuronal transmission and plasticity. The protein is E3 ubiquitin-protein ligase ZNRF1 (znrf1) of Xenopus laevis (African clawed frog).